The sequence spans 158 residues: C-type lectin mannose-binding isoform (158 aa).

The N-terminal stretch at 1-20 (MGRFLLVTLSMLVVTFSLNE) is a signal peptide. Disulfide bonds link Cys26–Cys37, Cys54–Cys154, and Cys129–Cys146. In terms of domain architecture, C-type lectin spans 33-155 (KNGFCYKVFN…CEALYHFICQ (123 aa)). The Mannose-binding signature appears at 119–121 (EPN). Residue Asn121 is glycosylated (N-linked (GlcNAc...) asparagine). Residues Glu127, Asn142, and Asp143 each coordinate Ca(2+).

Belongs to the true venom lectin family. Homodimer; disulfide-linked. As to expression, expressed by the venom gland.

It is found in the secreted. In terms of biological role, mannose-binding lectin that binds to and agglutinates erythrocytes in a calcium-dependent manner. This is C-type lectin mannose-binding isoform from Notechis scutatus scutatus (Mainland tiger snake).